A 315-amino-acid chain; its full sequence is Homoserine kinase (315 aa).

97–107 (PPARGLGSSAT) is an ATP binding site.

Belongs to the GHMP kinase family. Homoserine kinase subfamily.

It localises to the cytoplasm. The enzyme catalyses L-homoserine + ATP = O-phospho-L-homoserine + ADP + H(+). The protein operates within amino-acid biosynthesis; L-threonine biosynthesis; L-threonine from L-aspartate: step 4/5. Functionally, catalyzes the ATP-dependent phosphorylation of L-homoserine to L-homoserine phosphate. The sequence is that of Homoserine kinase from Prochlorococcus marinus (strain MIT 9215).